We begin with the raw amino-acid sequence, 462 residues long: Tubulin alpha-4 chain (462 aa).

8 residues coordinate GTP: Q11, E82, S151, G155, T156, T190, N217, and N239. E82 serves as a coordination point for Mg(2+). Residue E265 is part of the active site.

Belongs to the tubulin family. As to quaternary structure, dimer of alpha and beta chains. A typical microtubule is a hollow water-filled tube with an outer diameter of 25 nm and an inner diameter of 15 nM. Alpha-beta heterodimers associate head-to-tail to form protofilaments running lengthwise along the microtubule wall with the beta-tubulin subunit facing the microtubule plus end conferring a structural polarity. Microtubules usually have 13 protofilaments but different protofilament numbers can be found in some organisms and specialized cells. Mg(2+) is required as a cofactor.

The protein localises to the cytoplasm. Its subcellular location is the cytoskeleton. It carries out the reaction GTP + H2O = GDP + phosphate + H(+). Tubulin is the major constituent of microtubules, a cylinder consisting of laterally associated linear protofilaments composed of alpha- and beta-tubulin heterodimers. Microtubules grow by the addition of GTP-tubulin dimers to the microtubule end, where a stabilizing cap forms. Below the cap, tubulin dimers are in GDP-bound state, owing to GTPase activity of alpha-tubulin. The chain is Tubulin alpha-4 chain (alphaTub67C) from Drosophila melanogaster (Fruit fly).